We begin with the raw amino-acid sequence, 642 residues long: 5-aminolevulinate synthase, non-specific, mitochondrial (642 aa).

A mitochondrion-targeting transit peptide spans 1–56 (METVVRRCPFLSRVPQAFLQKAGKSLLFYAQNCPKMMEVGAKPAPRTVSTSAAQCQ). Residues 51–109 (SAAQCQQVKETPPANEKEKTAKAAVQQAPDESQMAQTPDGTQLPPGHPSPSTSQSSGSK) form a disordered region. Over residues 79 to 90 (PDESQMAQTPDG) the composition is skewed to polar residues. The span at 99–108 (SPSTSQSSGS) shows a compositional bias: low complexity. The substrate site is built by Arg219, Ser336, and Lys355. Pyridoxal 5'-phosphate is bound by residues Ser388, His416, and Thr444. Lys447 is a catalytic residue. Lys447 is subject to N6-(pyridoxal phosphate)lysine. Pyridoxal 5'-phosphate contacts are provided by Thr476 and Thr477. A substrate-binding site is contributed by Thr564. Pro578 carries the hydroxyproline modification.

Belongs to the class-II pyridoxal-phosphate-dependent aminotransferase family. In terms of assembly, homodimer. Interacts (hydroxylated form) with VHL. The cofactor is pyridoxal 5'-phosphate. In normoxia, is hydroxylated at Pro-578, promoting interaction with VHL, initiating ubiquitination and subsequent degradation via the proteasome. Post-translationally, ubiquitinated; in normoxia following hydroxylation and interaction with VHL, leading to its subsequent degradation via the proteasome. In terms of tissue distribution, expressed in the liver, kidney, brain and testis.

The protein resides in the mitochondrion inner membrane. The catalysed reaction is succinyl-CoA + glycine + H(+) = 5-aminolevulinate + CO2 + CoA. It functions in the pathway porphyrin-containing compound metabolism; protoporphyrin-IX biosynthesis; 5-aminolevulinate from glycine: step 1/1. Catalyzes the pyridoxal 5'-phosphate (PLP)-dependent condensation of succinyl-CoA and glycine to form aminolevulinic acid (ALA), with CoA and CO2 as by-products. The polypeptide is 5-aminolevulinate synthase, non-specific, mitochondrial (Alas1) (Rattus norvegicus (Rat)).